We begin with the raw amino-acid sequence, 149 residues long: Arginine regulator (149 aa).

Belongs to the ArgR family.

The protein resides in the cytoplasm. The protein operates within amino-acid degradation; L-arginine degradation via ADI pathway. In terms of biological role, regulates the transcription of the arc operon, involved in arginine catabolism. This is Arginine regulator (argR1) from Bacillus cereus (strain ATCC 14579 / DSM 31 / CCUG 7414 / JCM 2152 / NBRC 15305 / NCIMB 9373 / NCTC 2599 / NRRL B-3711).